A 103-amino-acid chain; its full sequence is NADH-quinone oxidoreductase subunit K (103 aa).

A run of 3 helical transmembrane segments spans residues 6-26 (IEYYLVVAAVLFLIGSIGFLL), 30-50 (LLVLLMSIELMLNAVNLTLVA), and 66-86 (FFVIAIAAAEAAVGLAIVLAF).

Belongs to the complex I subunit 4L family. In terms of assembly, NDH-1 is composed of 14 different subunits. Subunits NuoA, H, J, K, L, M, N constitute the membrane sector of the complex.

It localises to the cell inner membrane. It catalyses the reaction a quinone + NADH + 5 H(+)(in) = a quinol + NAD(+) + 4 H(+)(out). Functionally, NDH-1 shuttles electrons from NADH, via FMN and iron-sulfur (Fe-S) centers, to quinones in the respiratory chain. The immediate electron acceptor for the enzyme in this species is believed to be ubiquinone. Couples the redox reaction to proton translocation (for every two electrons transferred, four hydrogen ions are translocated across the cytoplasmic membrane), and thus conserves the redox energy in a proton gradient. The polypeptide is NADH-quinone oxidoreductase subunit K (Sorangium cellulosum (strain So ce56) (Polyangium cellulosum (strain So ce56))).